We begin with the raw amino-acid sequence, 210 residues long: Large ribosomal subunit protein bL25 (210 aa).

Belongs to the bacterial ribosomal protein bL25 family. CTC subfamily. In terms of assembly, part of the 50S ribosomal subunit; part of the 5S rRNA/L5/L18/L25 subcomplex. Contacts the 5S rRNA. Binds to the 5S rRNA independently of L5 and L18.

Its function is as follows. This is one of the proteins that binds to the 5S RNA in the ribosome where it forms part of the central protuberance. The chain is Large ribosomal subunit protein bL25 from Saccharophagus degradans (strain 2-40 / ATCC 43961 / DSM 17024).